The primary structure comprises 406 residues: 8-amino-7-oxononanoate synthase (406 aa).

Position 21 (arginine 21) interacts with substrate. 112 to 113 (GY) contributes to the pyridoxal 5'-phosphate binding site. Histidine 137 is a binding site for substrate. Pyridoxal 5'-phosphate contacts are provided by serine 183, histidine 211, and threonine 239. Lysine 242 carries the N6-(pyridoxal phosphate)lysine modification. A substrate-binding site is contributed by threonine 358.

The protein belongs to the class-II pyridoxal-phosphate-dependent aminotransferase family. BioF subfamily. In terms of assembly, homodimer. Pyridoxal 5'-phosphate is required as a cofactor.

It catalyses the reaction 6-carboxyhexanoyl-[ACP] + L-alanine + H(+) = (8S)-8-amino-7-oxononanoate + holo-[ACP] + CO2. It functions in the pathway cofactor biosynthesis; biotin biosynthesis. Catalyzes the decarboxylative condensation of pimeloyl-[acyl-carrier protein] and L-alanine to produce 8-amino-7-oxononanoate (AON), [acyl-carrier protein], and carbon dioxide. This Burkholderia cenocepacia (strain HI2424) protein is 8-amino-7-oxononanoate synthase.